An 81-amino-acid chain; its full sequence is Photosystem I iron-sulfur center (81 aa).

2 4Fe-4S ferredoxin-type domains span residues 2 to 31 (SHSV…MVAW) and 39 to 68 (IASA…VRVY). The [4Fe-4S] cluster site is built by cysteine 11, cysteine 14, cysteine 17, cysteine 21, cysteine 48, cysteine 51, cysteine 54, and cysteine 58.

In terms of assembly, the eukaryotic PSI reaction center is composed of at least 11 subunits. The cofactor is [4Fe-4S] cluster.

It is found in the plastid. It localises to the chloroplast thylakoid membrane. The catalysed reaction is reduced [plastocyanin] + hnu + oxidized [2Fe-2S]-[ferredoxin] = oxidized [plastocyanin] + reduced [2Fe-2S]-[ferredoxin]. Apoprotein for the two 4Fe-4S centers FA and FB of photosystem I (PSI); essential for photochemical activity. FB is the terminal electron acceptor of PSI, donating electrons to ferredoxin. The C-terminus interacts with PsaA/B/D and helps assemble the protein into the PSI complex. Required for binding of PsaD and PsaE to PSI. PSI is a plastocyanin/cytochrome c6-ferredoxin oxidoreductase, converting photonic excitation into a charge separation, which transfers an electron from the donor P700 chlorophyll pair to the spectroscopically characterized acceptors A0, A1, FX, FA and FB in turn. This Guillardia theta (Cryptophyte) protein is Photosystem I iron-sulfur center.